Consider the following 540-residue polypeptide: Glucose-6-phosphate isomerase (540 aa).

Residue glutamate 350 is the Proton donor of the active site. Catalysis depends on residues histidine 381 and lysine 503.

This sequence belongs to the GPI family.

The protein localises to the cytoplasm. The catalysed reaction is alpha-D-glucose 6-phosphate = beta-D-fructose 6-phosphate. It functions in the pathway carbohydrate biosynthesis; gluconeogenesis. The protein operates within carbohydrate degradation; glycolysis; D-glyceraldehyde 3-phosphate and glycerone phosphate from D-glucose: step 2/4. Functionally, catalyzes the reversible isomerization of glucose-6-phosphate to fructose-6-phosphate. The polypeptide is Glucose-6-phosphate isomerase (Burkholderia lata (strain ATCC 17760 / DSM 23089 / LMG 22485 / NCIMB 9086 / R18194 / 383)).